Here is a 294-residue protein sequence, read N- to C-terminus: Pyridoxal 5'-phosphate synthase subunit PdxS (294 aa).

Asp24 contributes to the D-ribose 5-phosphate binding site. Catalysis depends on Lys81, which acts as the Schiff-base intermediate with D-ribose 5-phosphate. Gly153 contributes to the D-ribose 5-phosphate binding site. Position 165 (Arg165) interacts with D-glyceraldehyde 3-phosphate. D-ribose 5-phosphate is bound by residues Gly214 and 235–236; that span reads GS.

This sequence belongs to the PdxS/SNZ family. In terms of assembly, homohexamer and homododecamer. In the presence of PdxT, forms a dodecamer of heterodimers.

It catalyses the reaction aldehydo-D-ribose 5-phosphate + D-glyceraldehyde 3-phosphate + L-glutamine = pyridoxal 5'-phosphate + L-glutamate + phosphate + 3 H2O + H(+). The protein operates within cofactor biosynthesis; pyridoxal 5'-phosphate biosynthesis. Catalyzes the formation of pyridoxal 5'-phosphate from ribose 5-phosphate (RBP), glyceraldehyde 3-phosphate (G3P) and ammonia. The ammonia is provided by the PdxT subunit. Can also use ribulose 5-phosphate and dihydroxyacetone phosphate as substrates, resulting from enzyme-catalyzed isomerization of RBP and G3P, respectively. The chain is Pyridoxal 5'-phosphate synthase subunit PdxS from Geobacillus kaustophilus (strain HTA426).